A 447-amino-acid chain; its full sequence is MDEIWERAVEAALDGQTDRLATRTLTLDGAVKCVQGRLPPPSVLEKFQNLQHLSVANIGVSSLEQFPRLGNLQKLILSDNRITVGLEFLVEAGLDSFCDLDLSNNRIQFVEDLAPLAELKLVSLDLYECPVTRLKDYRSRVFGLIKTLKYLDKTDAEGNERPESDDEDDEEDEEDEEEEEEGDEEDPGSGEIDGDERAEAPRMSNGHSERVDGVVDVDEDEESDAEDDESEQATGVNGTSYRANGFRLEAVNGEEVREDDGDDSESGEEEVGEDNDVVEVHEIEDSENEEDGVDDEEDDEEDEEEEEVDNADRGLGGSGSTSRLMNAGEIDGHEQGDDDEDGDGETGEDDQGVEDDGEFADEDDDVEEEDEESGEGYLVQPVSQVEDHDAVGNDIEPINEDNDPDEEEEVEDDLPIPDQSLASSSRPKRKRDDDDDGEDDDDDDEER.

LRR repeat units lie at residues 49–70, 71–90, and 96–117; these read NLQH…PRLG, NLQK…EFLV, and SFCD…APLA. Residues 129 to 167 form the LRRCT domain; sequence CPVTRLKDYRSRVFGLIKTLKYLDKTDAEGNERPESDDE. Residues 155-447 are disordered; the sequence is DAEGNERPES…EDDDDDDEER (293 aa). 2 stretches are compositionally biased toward acidic residues: residues 163 to 194 and 215 to 231; these read ESDD…EIDG and VDVD…DESE. Polar residues predominate over residues 232–242; it reads QATGVNGTSYR. Composition is skewed to acidic residues over residues 256 to 277, 284 to 309, 336 to 374, 397 to 415, and 433 to 447; these read VRED…DNDV, EDSE…EEVD, GDDD…EESG, PINE…DDLP, and DDDD…DEER.

This sequence belongs to the ANP32 family.

The sequence is that of Acidic leucine-rich nuclear phosphoprotein 32-related protein from Arabidopsis thaliana (Mouse-ear cress).